We begin with the raw amino-acid sequence, 88 residues long: Small ribosomal subunit protein bS20 (88 aa).

Residues 1 to 12 show a composition bias toward basic residues; sequence MANHKSALKRAK. Positions 1–23 are disordered; the sequence is MANHKSALKRAKQNTIKQMRNRS.

It belongs to the bacterial ribosomal protein bS20 family.

Functionally, binds directly to 16S ribosomal RNA. The protein is Small ribosomal subunit protein bS20 of Desulfatibacillum aliphaticivorans.